The following is a 109-amino-acid chain: Phosphoribosyl-ATP pyrophosphatase (109 aa).

This sequence belongs to the PRA-PH family.

The protein resides in the cytoplasm. It carries out the reaction 1-(5-phospho-beta-D-ribosyl)-ATP + H2O = 1-(5-phospho-beta-D-ribosyl)-5'-AMP + diphosphate + H(+). Its pathway is amino-acid biosynthesis; L-histidine biosynthesis; L-histidine from 5-phospho-alpha-D-ribose 1-diphosphate: step 2/9. The chain is Phosphoribosyl-ATP pyrophosphatase from Sphingopyxis alaskensis (strain DSM 13593 / LMG 18877 / RB2256) (Sphingomonas alaskensis).